Consider the following 186-residue polypeptide: MRIGLFGGSFDPIHLGHLLAASQAQEVLCLDRVLFVVAARPPHKVPVAPAEARYEMTLLAVAEDPRFTVSRLELDRPGPSYTVDTLREARRLFPQDELFFITGADAYRDVLTWKEGERLPEYATLVAVARPGYPLEEAPLPVVPLFVPEVGISSTEIRRRLKEGRSVRYWVPRAVEVYIEKHGLYR.

It belongs to the NadD family.

It catalyses the reaction nicotinate beta-D-ribonucleotide + ATP + H(+) = deamido-NAD(+) + diphosphate. It functions in the pathway cofactor biosynthesis; NAD(+) biosynthesis; deamido-NAD(+) from nicotinate D-ribonucleotide: step 1/1. Functionally, catalyzes the reversible adenylation of nicotinate mononucleotide (NaMN) to nicotinic acid adenine dinucleotide (NaAD). The chain is Probable nicotinate-nucleotide adenylyltransferase from Thermus thermophilus (strain ATCC 27634 / DSM 579 / HB8).